Consider the following 593-residue polypeptide: uncharacterized protein (593 aa).

The next 12 membrane-spanning stretches (helical) occupy residues 21-41, 60-80, 97-117, 148-168, 204-224, 243-263, 275-295, 328-348, 359-379, 410-430, 457-477, and 485-505; these read PAVFIPASVVIVAMIVVSVVY, VGWWYILVATGFVVFALYCGI, FSFWAWLAMLFSAGMGIGLVF, MALTVFHWGLHAWAIYVVVGL, VDVIAIVGTLFGVATSLGFGI, WMVGMIAAITATATASVVSGV, MALAAALALFVLLLGPTLFLL, WTIFYWGWWISWAPFVGMFIA, FIGAVLLVPTVIASLWFTIFG, GLPIGAITSVLAVLVIVFFFV, VYWAVLEGVAAAVLLLIGGAG, and AAIATALPFSIVMVVACYAMT.

It belongs to the BCCT transporter (TC 2.A.15) family.

The protein localises to the cell membrane. This is an uncharacterized protein from Mycobacterium tuberculosis (strain CDC 1551 / Oshkosh).